We begin with the raw amino-acid sequence, 193 residues long: MTGLEIWLLAIGLAMDCFAVSIASGIILKRTQWRPMLVMALAFGLFQALMPFIGWMFAKTFSHLIESVDHWIAFAILAFLGGRMILESFKDEDCRQTFNPASPKVVFTMAIATSIDALAIGISFALLGINNYTEILSPILIIGFVSFVMSLIGLYFGIKCGCGCARKLKAELWGGIILVAIGLKILIEHLFLQ.

A run of 6 helical transmembrane segments spans residues 8 to 28 (LLAIGLAMDCFAVSIASGIIL), 37 to 57 (LVMALAFGLFQALMPFIGWMF), 61 to 81 (FSHLIESVDHWIAFAILAFLG), 109 to 129 (MAIATSIDALAIGISFALLGI), 138 to 158 (PILIIGFVSFVMSLIGLYFGI), and 172 to 192 (LWGGIILVAIGLKILIEHLFL).

Belongs to the MntP (TC 9.B.29) family.

It localises to the cell inner membrane. Probably functions as a manganese efflux pump. In Bacteroides thetaiotaomicron (strain ATCC 29148 / DSM 2079 / JCM 5827 / CCUG 10774 / NCTC 10582 / VPI-5482 / E50), this protein is Putative manganese efflux pump MntP.